The chain runs to 213 residues: Orotate phosphoribosyltransferase (213 aa).

A 5-phospho-alpha-D-ribose 1-diphosphate-binding site is contributed by K26. 34 to 35 (FF) contributes to the orotate binding site. Residues 72 to 73 (YK), R99, K100, K103, H105, and 124 to 132 (DDVITAGTA) each bind 5-phospho-alpha-D-ribose 1-diphosphate. Residues T128 and R156 each coordinate orotate.

Belongs to the purine/pyrimidine phosphoribosyltransferase family. PyrE subfamily. As to quaternary structure, homodimer. The cofactor is Mg(2+).

It carries out the reaction orotidine 5'-phosphate + diphosphate = orotate + 5-phospho-alpha-D-ribose 1-diphosphate. It functions in the pathway pyrimidine metabolism; UMP biosynthesis via de novo pathway; UMP from orotate: step 1/2. Catalyzes the transfer of a ribosyl phosphate group from 5-phosphoribose 1-diphosphate to orotate, leading to the formation of orotidine monophosphate (OMP). The sequence is that of Orotate phosphoribosyltransferase from Vibrio atlanticus (strain LGP32) (Vibrio splendidus (strain Mel32)).